Consider the following 609-residue polypeptide: Frizzled and smoothened-like protein E (609 aa).

The N-terminal stretch at 1–20 (MEMIRIFLIYLILKIIIING) is a signal peptide. Over 21–259 (ENNEYSKGYG…QWKRVYDMAK (239 aa)) the chain is Extracellular. One can recognise an FZ domain in the interval 35 to 192 (FPGSKCLNYV…GLYKVPCIDP (158 aa)). Disulfide bonds link Cys-40-Cys-118, Cys-53-Cys-111, Cys-100-Cys-149, and Cys-138-Cys-189. N-linked (GlcNAc...) asparagine glycans are attached at residues Asn-75, Asn-130, Asn-172, Asn-198, Asn-217, and Asn-245. The chain crosses the membrane as a helical span at residues 260 to 280 (TLSSISFICACYNILTFGILN). Over 281–288 (RKRKSKYN) the chain is Cytoplasmic. Residues 289–309 (ICITLMSTSIALVYLTDIIKF) traverse the membrane as a helical segment. The Extracellular portion of the chain corresponds to 310 to 337 (GYGIEEFLCPEPGRSAVQNDAACGITGA). A helical membrane pass occupies residues 338-358 (MFHFGITYCCCWAMTMSIVLF). At 359–365 (CSVKRIK) the chain is on the cytoplasmic side. Residues 366–386 (LFYFRHFMIGNTIFTIITTVI) form a helical membrane-spanning segment. Topologically, residues 387–408 (LLSAKKMVAGTGYIECWVRERW) are extracellular. A helical membrane pass occupies residues 409–429 (FVITLFWLPCGIGLSIGIFCI). At 430-457 (GGVIHEIYNISKKVNIRESEFILRQIKP) the chain is on the cytoplasmic side. Residues 458–478 (FSLVFSVAGSFLYLFIFFFDV) form a helical membrane-spanning segment. The Extracellular portion of the chain corresponds to 479–511 (ERKIDSYKAAVADYVLCLLSGGSEETCFTTGPN). Residues 512-532 (YASFFIFYFFIRVFGVLFFSI) form a helical membrane-spanning segment. The Cytoplasmic portion of the chain corresponds to 533 to 609 (YGTSRVARDI…DSKSIELEKK (77 aa)). The span at 559–570 (ESGISRNNSRTD) shows a compositional bias: polar residues. The disordered stretch occupies residues 559–609 (ESGISRNNSRTDISFGKNNNSKNSNNSKNSNNSKNSNNSDNDSKSIELEKK). Residues 575–598 (KNNNSKNSNNSKNSNNSKNSNNSD) show a composition bias toward low complexity. Basic and acidic residues predominate over residues 599 to 609 (NDSKSIELEKK).

The protein belongs to the G-protein coupled receptor Fz/Smo family.

It is found in the membrane. The sequence is that of Frizzled and smoothened-like protein E (fslE) from Dictyostelium discoideum (Social amoeba).